We begin with the raw amino-acid sequence, 159 residues long: Ribosomal RNA large subunit methyltransferase H (159 aa).

S-adenosyl-L-methionine-binding positions include Leu-76, Gly-108, and Phe-127–Phe-132.

The protein belongs to the RNA methyltransferase RlmH family. As to quaternary structure, homodimer.

It localises to the cytoplasm. It catalyses the reaction pseudouridine(1915) in 23S rRNA + S-adenosyl-L-methionine = N(3)-methylpseudouridine(1915) in 23S rRNA + S-adenosyl-L-homocysteine + H(+). Its function is as follows. Specifically methylates the pseudouridine at position 1915 (m3Psi1915) in 23S rRNA. The protein is Ribosomal RNA large subunit methyltransferase H of Staphylococcus haemolyticus (strain JCSC1435).